The primary structure comprises 483 residues: Coagulation factor X isoform 1 (483 aa).

The N-terminal stretch at 1 to 20 is a signal peptide; it reads MAPQLLLCLILTFLWSLPEA. Residues 21 to 40 constitute a propeptide that is removed on maturation; the sequence is ESNVFLKSKVANRFLQRTKR. In terms of domain architecture, Gla spans 41 to 86; sequence ANSLFEEFKSGNIERECIEERCSKEEAREAFEDDEKTETFWNVYVD. 4-carboxyglutamate is present on residues glutamate 46, glutamate 47, glutamate 54, glutamate 56, glutamate 59, glutamate 60, glutamate 65, glutamate 66, glutamate 69, glutamate 72, and glutamate 75. Cysteine 57 and cysteine 62 form a disulfide bridge. An EGF-like 1; calcium-binding domain is found at 86–122; it reads DGDQCSSNPCHYGGTCKDGIGSYTCTCLSGYEGKNCE. Intrachain disulfides connect cysteine 90–cysteine 101, cysteine 95–cysteine 110, cysteine 112–cysteine 121, cysteine 129–cysteine 140, cysteine 136–cysteine 149, cysteine 151–cysteine 164, cysteine 172–cysteine 345, cysteine 245–cysteine 250, cysteine 265–cysteine 281, cysteine 393–cysteine 407, and cysteine 418–cysteine 446. An O-linked (Hex...) serine glycan is attached at serine 92. Aspartate 103 is modified ((3R)-3-hydroxyaspartate). The EGF-like 2 domain maps to 125-165; sequence LYKSCRVDNGDCWHFCKPVQNGIQCSCAESYLLGEDGHSCV. The propeptide at 183–238 is activation peptide; the sequence is EANLPDFQTDFSDDYDEIDENNFVETPTNFSGLVLTVQSQNATLLKKSDNPSPDIR. The Peptidase S1 domain occupies 239 to 470; it reads VVNGTDCKLG…FILWIKRIIR (232 aa). Histidine 280 (charge relay system) is an active-site residue. A glycan (N-linked (GlcNAc...) asparagine) is linked at asparagine 283. The active-site Charge relay system is aspartate 325. Residue serine 422 is the Charge relay system of the active site.

It belongs to the peptidase S1 family. In terms of assembly, heterodimer of a light chain and a heavy chain; disulfide-linked. Gamma-carboxyglutamate residues are formed by vitamin K dependent carboxylation. These residues are essential for the binding of calcium. In terms of processing, the activation peptide is cleaved by factor IXa (in the intrinsic pathway), or by factor VIIa (in the extrinsic pathway). Post-translationally, the iron and 2-oxoglutarate dependent 3-hydroxylation of aspartate and asparagine is (R) stereospecific within EGF domains. In terms of tissue distribution, plasma; synthesized in the liver.

The protein localises to the secreted. The enzyme catalyses Selective cleavage of Arg-|-Thr and then Arg-|-Ile bonds in prothrombin to form thrombin.. Its function is as follows. Factor Xa is a vitamin K-dependent glycoprotein that converts prothrombin to thrombin in the presence of factor Va, calcium and phospholipid during blood clotting. This is Coagulation factor X isoform 1 (F10) from Pseudonaja textilis (Eastern brown snake).